The sequence spans 134 residues: Small ribosomal subunit protein uS11 (134 aa).

It belongs to the universal ribosomal protein uS11 family. In terms of assembly, part of the 30S ribosomal subunit. Interacts with proteins S7 and S18. Binds to IF-3.

Functionally, located on the platform of the 30S subunit, it bridges several disparate RNA helices of the 16S rRNA. Forms part of the Shine-Dalgarno cleft in the 70S ribosome. This chain is Small ribosomal subunit protein uS11, found in Paracidovorax citrulli (strain AAC00-1) (Acidovorax citrulli).